The following is a 304-amino-acid chain: DCN1-like protein 3 (304 aa).

2 disordered regions span residues 1 to 86 and 284 to 304; these read MGQC…AEES and EGEG…EEQT. G2 carries the N-myristoyl glycine lipid modification. Residues 86 to 278 enclose the DCUN1 domain; it reads SSLQRLEELF…LFDTFVEWEM (193 aa).

Part of a complex containing DCUN1D3, CUL3 and RBX1. Interacts (via the DCUN1 domain) with the unneddylated cullins: interacts with CUL1, CUL2, CUL3, CUL4A, CUL4B and CUL5; these interactions promote the cullin neddylation and the identity of the cullin dictates the affinity of the interaction. Interacts preferentially with CUL3; this interaction triggers the relocalization of CUL3 to the cell membrane where CUL3 is neddylated. Interacts (via DCUN1 domain) with RBX1. May also interact with regulators or subunits of cullin-RING ligases such as RNF7, ELOB and DDB1; these interactions are bridged by cullins. Interacts (via DCUN1 domain) with CAND1; this interaction is bridged by cullins and strongly inhibits cullin neddylation. These CAND-cullin-DCNL complexes can only be neddylated in the presence of a substrate adapter. Interacts (via DCUN1 domain) with the N-terminally acetylated form of UBE2M and UBE2F.

Its subcellular location is the cell membrane. The protein resides in the cytoplasm. It is found in the nucleus. The protein localises to the perinuclear region. Its function is as follows. Contributes to the neddylation of all cullins by transferring NEDD8 from N-terminally acetylated NEDD8-conjugating E2s enzyme to different cullin C-terminal domain-RBX complexes and may play a role in the cell cycle progression by regulating the SCF ubiquitin E3 ligase complex, after UV damage. At the cell membrane, can promote and as well inhibit cullins neddylation. The protein is DCN1-like protein 3 of Pongo abelii (Sumatran orangutan).